Consider the following 632-residue polypeptide: Biosynthetic arginine decarboxylase (632 aa).

The residue at position 101 (lysine 101) is an N6-(pyridoxal phosphate)lysine. 281–291 (FDVGGGLGVDY) is a binding site for substrate.

Belongs to the Orn/Lys/Arg decarboxylase class-II family. SpeA subfamily. It depends on Mg(2+) as a cofactor. The cofactor is pyridoxal 5'-phosphate.

The catalysed reaction is L-arginine + H(+) = agmatine + CO2. It functions in the pathway amine and polyamine biosynthesis; agmatine biosynthesis; agmatine from L-arginine: step 1/1. Its function is as follows. Catalyzes the biosynthesis of agmatine from arginine. The sequence is that of Biosynthetic arginine decarboxylase from Salmonella dublin (strain CT_02021853).